The sequence spans 158 residues: Deoxyuridine 5'-triphosphate nucleotidohydrolase (158 aa).

Residues 75 to 77, N88, 92 to 94, and K102 contribute to the substrate site; these read RSG and TVD.

It belongs to the dUTPase family. Mg(2+) is required as a cofactor.

It catalyses the reaction dUTP + H2O = dUMP + diphosphate + H(+). It participates in pyrimidine metabolism; dUMP biosynthesis; dUMP from dCTP (dUTP route): step 2/2. Its function is as follows. This enzyme is involved in nucleotide metabolism: it produces dUMP, the immediate precursor of thymidine nucleotides and it decreases the intracellular concentration of dUTP so that uracil cannot be incorporated into DNA. This is Deoxyuridine 5'-triphosphate nucleotidohydrolase from Bifidobacterium longum subsp. infantis (strain ATCC 15697 / DSM 20088 / JCM 1222 / NCTC 11817 / S12).